The sequence spans 128 residues: Large ribosomal subunit protein bL21 (128 aa).

Residues 104–128 (GKSPSVGPRPKRVKAEPAPAADAAE) are disordered. Over residues 119-128 (EPAPAADAAE) the composition is skewed to low complexity.

This sequence belongs to the bacterial ribosomal protein bL21 family. Part of the 50S ribosomal subunit. Contacts protein L20.

Its function is as follows. This protein binds to 23S rRNA in the presence of protein L20. This Rhodopseudomonas palustris (strain HaA2) protein is Large ribosomal subunit protein bL21.